The primary structure comprises 327 residues: Glycerol-3-phosphate dehydrogenase [NAD(P)+] (327 aa).

Positions 13, 34, and 107 each coordinate NADPH. Sn-glycerol 3-phosphate-binding residues include Lys107 and Gly135. Ala139 is a binding site for NADPH. The sn-glycerol 3-phosphate site is built by Lys190, Asp243, Ser253, Arg254, and Asn255. Lys190 functions as the Proton acceptor in the catalytic mechanism. Residue Arg254 coordinates NADPH. NADPH is bound by residues Val276 and Glu277.

It belongs to the NAD-dependent glycerol-3-phosphate dehydrogenase family.

It localises to the cytoplasm. The enzyme catalyses sn-glycerol 3-phosphate + NAD(+) = dihydroxyacetone phosphate + NADH + H(+). The catalysed reaction is sn-glycerol 3-phosphate + NADP(+) = dihydroxyacetone phosphate + NADPH + H(+). The protein operates within membrane lipid metabolism; glycerophospholipid metabolism. Functionally, catalyzes the reduction of the glycolytic intermediate dihydroxyacetone phosphate (DHAP) to sn-glycerol 3-phosphate (G3P), the key precursor for phospholipid synthesis. The chain is Glycerol-3-phosphate dehydrogenase [NAD(P)+] from Rhizobium etli (strain ATCC 51251 / DSM 11541 / JCM 21823 / NBRC 15573 / CFN 42).